Reading from the N-terminus, the 174-residue chain is Ribosome maturation factor RimM (174 aa).

The 75-residue stretch at 96–170 (PDEFYDHELE…YVVIDPPEGL (75 aa)) folds into the PRC barrel domain.

Belongs to the RimM family. As to quaternary structure, binds ribosomal protein uS19.

It is found in the cytoplasm. Its function is as follows. An accessory protein needed during the final step in the assembly of 30S ribosomal subunit, possibly for assembly of the head region. Essential for efficient processing of 16S rRNA. May be needed both before and after RbfA during the maturation of 16S rRNA. It has affinity for free ribosomal 30S subunits but not for 70S ribosomes. The polypeptide is Ribosome maturation factor RimM (Nocardia farcinica (strain IFM 10152)).